The primary structure comprises 170 residues: Ribosome maturation factor RimM (170 aa).

The region spanning 98–170 is the PRC barrel domain; that stretch reads PDEYYWVDLE…LIVVDWDPDF (73 aa).

Belongs to the RimM family. Binds ribosomal protein uS19.

It is found in the cytoplasm. In terms of biological role, an accessory protein needed during the final step in the assembly of 30S ribosomal subunit, possibly for assembly of the head region. Essential for efficient processing of 16S rRNA. May be needed both before and after RbfA during the maturation of 16S rRNA. It has affinity for free ribosomal 30S subunits but not for 70S ribosomes. This is Ribosome maturation factor RimM from Xanthomonas axonopodis pv. citri (strain 306).